Here is a 183-residue protein sequence, read N- to C-terminus: Putative manganese efflux pump MntP 1 (183 aa).

6 consecutive transmembrane segments (helical) span residues 6 to 26, 36 to 56, 64 to 84, 100 to 120, 130 to 150, and 158 to 178; these read LFLL…CIGI, MIFV…GGYI, IVPI…ILMI, IMYL…GFTT, LFMS…LGII, and ISII…LFGL.

It belongs to the MntP (TC 9.B.29) family.

Its subcellular location is the cell membrane. In terms of biological role, probably functions as a manganese efflux pump. In Clostridium botulinum (strain Hall / ATCC 3502 / NCTC 13319 / Type A), this protein is Putative manganese efflux pump MntP 1.